Here is a 353-residue protein sequence, read N- to C-terminus: DNA-directed RNA polymerase subunit alpha (353 aa).

Residues 1 to 245 (MEKIQKITYK…AHFQIIGNIN (245 aa)) are alpha N-terminal domain (alpha-NTD). An alpha C-terminal domain (alpha-CTD) region spans residues 261 to 353 (EREIKSTTPI…QLNNSEEGEE (93 aa)).

It belongs to the RNA polymerase alpha chain family. Homodimer. The RNAP catalytic core consists of 2 alpha, 1 beta, 1 beta' and 1 omega subunit. When a sigma factor is associated with the core the holoenzyme is formed, which can initiate transcription.

It catalyses the reaction RNA(n) + a ribonucleoside 5'-triphosphate = RNA(n+1) + diphosphate. In terms of biological role, DNA-dependent RNA polymerase catalyzes the transcription of DNA into RNA using the four ribonucleoside triphosphates as substrates. In Mycoplasma sp, this protein is DNA-directed RNA polymerase subunit alpha.